Consider the following 174-residue polypeptide: NADH-quinone oxidoreductase subunit I (174 aa).

2 4Fe-4S ferredoxin-type domains span residues 44-74 (LNRYPDGLEKCIGCELCAWACPADAIYVEGD) and 90-119 (RVYQINYLRCIGCGLCIEACPTRALTMTND). Positions 54, 57, 60, 64, 99, 102, 105, and 109 each coordinate [4Fe-4S] cluster.

This sequence belongs to the complex I 23 kDa subunit family. As to quaternary structure, NDH-1 is composed of 14 different subunits. Subunits NuoA, H, J, K, L, M, N constitute the membrane sector of the complex. [4Fe-4S] cluster is required as a cofactor.

The protein localises to the cell membrane. The catalysed reaction is a quinone + NADH + 5 H(+)(in) = a quinol + NAD(+) + 4 H(+)(out). Its function is as follows. NDH-1 shuttles electrons from NADH, via FMN and iron-sulfur (Fe-S) centers, to quinones in the respiratory chain. The immediate electron acceptor for the enzyme in this species is believed to be menaquinone. Couples the redox reaction to proton translocation (for every two electrons transferred, four hydrogen ions are translocated across the cytoplasmic membrane), and thus conserves the redox energy in a proton gradient. The sequence is that of NADH-quinone oxidoreductase subunit I from Mycobacterium sp. (strain JLS).